The sequence spans 163 residues: Protein-export protein SecB (163 aa).

Belongs to the SecB family. Homotetramer, a dimer of dimers. One homotetramer interacts with 1 SecA dimer.

Its subcellular location is the cytoplasm. Functionally, one of the proteins required for the normal export of preproteins out of the cell cytoplasm. It is a molecular chaperone that binds to a subset of precursor proteins, maintaining them in a translocation-competent state. It also specifically binds to its receptor SecA. In Pseudomonas aeruginosa (strain LESB58), this protein is Protein-export protein SecB.